A 313-amino-acid chain; its full sequence is Probable cell division protein WhiA (313 aa).

The segment at residues 277 to 311 (SLKEVAAQVPDGPISKSGVNHRFQKIREIAKQLKE) is a DNA-binding region (H-T-H motif).

Belongs to the WhiA family.

Involved in cell division and chromosome segregation. In Lactobacillus johnsonii (strain CNCM I-12250 / La1 / NCC 533), this protein is Probable cell division protein WhiA.